The sequence spans 309 residues: uncharacterized protein (309 aa).

Transmembrane regions (helical) follow at residues 28–48 (IIALSSLLTLLINHPSLIMKP), 73–93 (MMLNLFRWVCIAILVLVVIGW), 113–133 (LIVIDGGEQAAAVMTFLLLPI), 157–177 (ITAFISYFVIRIQVAVLYFHS), 220–240 (FVVIPTWGTLLVQIVIFAALF), and 259–279 (IFAVMLGLISFSIIMAGILIL).

It is found in the cell membrane. This is an uncharacterized protein from Bacillus subtilis (strain 168).